The primary structure comprises 457 residues: tRNA-2-methylthio-N(6)-dimethylallyladenosine synthase (457 aa).

One can recognise an MTTase N-terminal domain in the interval 3-120; the sequence is KKVYVKTFGC…LPQMIDARRE (118 aa). [4Fe-4S] cluster is bound by residues Cys12, Cys49, Cys83, Cys157, Cys161, and Cys164. Residues 143-377 form the Radical SAM core domain; sequence RVEGPSAFVS…QATIEENVAR (235 aa). A TRAM domain is found at 380–447; that stretch reads QSMVGKVERI…PHSLRGELVL (68 aa).

The protein belongs to the methylthiotransferase family. MiaB subfamily. In terms of assembly, monomer. It depends on [4Fe-4S] cluster as a cofactor.

Its subcellular location is the cytoplasm. The enzyme catalyses N(6)-dimethylallyladenosine(37) in tRNA + (sulfur carrier)-SH + AH2 + 2 S-adenosyl-L-methionine = 2-methylsulfanyl-N(6)-dimethylallyladenosine(37) in tRNA + (sulfur carrier)-H + 5'-deoxyadenosine + L-methionine + A + S-adenosyl-L-homocysteine + 2 H(+). In terms of biological role, catalyzes the methylthiolation of N6-(dimethylallyl)adenosine (i(6)A), leading to the formation of 2-methylthio-N6-(dimethylallyl)adenosine (ms(2)i(6)A) at position 37 in tRNAs that read codons beginning with uridine. The polypeptide is tRNA-2-methylthio-N(6)-dimethylallyladenosine synthase (Burkholderia lata (strain ATCC 17760 / DSM 23089 / LMG 22485 / NCIMB 9086 / R18194 / 383)).